A 296-amino-acid chain; its full sequence is tRNA dimethylallyltransferase (296 aa).

11–18 (GPTAVGKT) provides a ligand contact to ATP. 13–18 (TAVGKT) is a substrate binding site. Positions 36-39 (DSQQ) are interaction with substrate tRNA.

The protein belongs to the IPP transferase family. In terms of assembly, monomer. It depends on Mg(2+) as a cofactor.

The enzyme catalyses adenosine(37) in tRNA + dimethylallyl diphosphate = N(6)-dimethylallyladenosine(37) in tRNA + diphosphate. Functionally, catalyzes the transfer of a dimethylallyl group onto the adenine at position 37 in tRNAs that read codons beginning with uridine, leading to the formation of N6-(dimethylallyl)adenosine (i(6)A). The chain is tRNA dimethylallyltransferase from Streptococcus equi subsp. zooepidemicus (strain H70).